Consider the following 690-residue polypeptide: Probable xyloglucan glycosyltransferase 1 (690 aa).

The next 2 membrane-spanning stretches (helical) occupy residues 120-140 (AFLLLSVLLLAVDVAAHAQGW) and 166-186 (LEYLAPGLQFLANACVVLFLI). Asp-272 is an active-site residue. 2 residues coordinate substrate: Asp-331 and Asp-333. Residue Asp-425 is part of the active site. 2 consecutive transmembrane segments (helical) span residues 503-523 (LILPFYSFTLFCIILPMTMFV) and 528-548 (LPAWVVCYIPATMSLLNILPA). The segment at 607-637 (QPKQQRVGSAPNLDSLAKESHPKKDSKKKKH) is disordered. 2 consecutive transmembrane segments (helical) span residues 640–659 (IYQKELALSFLLLTAAARSL) and 665–685 (IHFYFLLFQGVSFLVVGLDLI).

Belongs to the glycosyltransferase 2 family. Plant cellulose synthase-like C subfamily.

Its subcellular location is the golgi apparatus membrane. Functionally, probable beta-1,4-glucan synthase rather involved in the synthesis of the xyloglucan backbone than cellulose. Seems to work simultaneously with xyloglucan 6-xylosyltransferase. Xyloglucan is a noncellulosic polysaccharides of plant cell wall and consists of a glucan backbone substituted by xylose, galactose and fucose. The sequence is that of Probable xyloglucan glycosyltransferase 1 (CSLC1) from Oryza sativa subsp. japonica (Rice).